We begin with the raw amino-acid sequence, 291 residues long: UTP--glucose-1-phosphate uridylyltransferase (291 aa).

It belongs to the UDPGP type 2 family.

The catalysed reaction is alpha-D-glucose 1-phosphate + UTP + H(+) = UDP-alpha-D-glucose + diphosphate. In terms of biological role, may play a role in stationary phase survival. In Mycoplasma pneumoniae (strain ATCC 29342 / M129 / Subtype 1) (Mycoplasmoides pneumoniae), this protein is UTP--glucose-1-phosphate uridylyltransferase (galU).